The sequence spans 243 residues: Uridylate kinase (243 aa).

K18–G21 is a binding site for ATP. Residue G59 participates in UMP binding. ATP is bound by residues G60 and R64. UMP contacts are provided by residues D79 and M140–T147. Residues Y173 and D176 each contribute to the ATP site.

It belongs to the UMP kinase family. In terms of assembly, homohexamer.

The protein localises to the cytoplasm. The enzyme catalyses UMP + ATP = UDP + ADP. It functions in the pathway pyrimidine metabolism; CTP biosynthesis via de novo pathway; UDP from UMP (UMPK route): step 1/1. With respect to regulation, inhibited by UTP. Catalyzes the reversible phosphorylation of UMP to UDP. The protein is Uridylate kinase of Corynebacterium glutamicum (strain R).